Reading from the N-terminus, the 441-residue chain is N-acetylmuramyl-L-alanine amidase (441 aa).

A signal peptide spans 1-25 (MKTKTLFIFSAILTLSIFAPNETFA).

It belongs to the peptidase S12 family.

It carries out the reaction Hydrolyzes the link between N-acetylmuramoyl residues and L-amino acid residues in certain cell-wall glycopeptides.. Its pathway is cell wall biogenesis; peptidoglycan recycling. Involved in muropeptide recycling. Hydrolyzes the amide bond between N-acetylmuramic acid (MurNAc) and the L-alanine residue of the stem peptide. Cannot hydrolyze muropeptides containing N-acetylglucosamine (GlcNAc) at the non-reducing end. This chain is N-acetylmuramyl-L-alanine amidase, found in Bacillus subtilis (strain 168).